A 324-amino-acid chain; its full sequence is NADH-ubiquinone oxidoreductase chain 1 (324 aa).

Helical transmembrane passes span 9–29 (LINPLAYIVPVLLAVAFLTLL), 76–96 (LFLVTPMLALTLAMTLWAPMP), 106–126 (LGVLFILALSSLAVYSILGSG), 146–166 (ISYEVSLGLILRSIIIFWGGY), 177–197 (ALWLLLPACPLAAMWYISTLA), 228–248 (LLFLAEYANILLMNTLSAILF), 259–279 (ELTTINLMTKAALLSVVFLWV), and 299–319 (FLPLTLALVLWHTALPIAFAG).

The protein belongs to the complex I subunit 1 family.

The protein resides in the mitochondrion inner membrane. The catalysed reaction is a ubiquinone + NADH + 5 H(+)(in) = a ubiquinol + NAD(+) + 4 H(+)(out). Functionally, core subunit of the mitochondrial membrane respiratory chain NADH dehydrogenase (Complex I) that is believed to belong to the minimal assembly required for catalysis. Complex I functions in the transfer of electrons from NADH to the respiratory chain. The immediate electron acceptor for the enzyme is believed to be ubiquinone. The protein is NADH-ubiquinone oxidoreductase chain 1 (MT-ND1) of Formosania lacustris (Oriental stream loach).